A 452-amino-acid chain; its full sequence is Retinoid-inducible serine carboxypeptidase (452 aa).

Residues Met-1–Gly-26 form the signal peptide. N-linked (GlcNAc...) asparagine glycosylation is found at Asn-64 and Asn-126. The active site involves Ser-167. Asn-362 carries N-linked (GlcNAc...) asparagine glycosylation. Residues Asp-371 and His-431 contribute to the active site.

The protein belongs to the peptidase S10 family.

It localises to the secreted. May be involved in vascular wall and kidney homeostasis. The chain is Retinoid-inducible serine carboxypeptidase (SCPEP1) from Homo sapiens (Human).